Here is a 347-residue protein sequence, read N- to C-terminus: ATPase GET3 (347 aa).

Position 26 to 33 (26 to 33 (KGGVGKTT)) interacts with ATP. Aspartate 57 is an active-site residue. Residues glutamate 241 and asparagine 268 each coordinate ATP. 2 residues coordinate Zn(2+): cysteine 279 and cysteine 282.

This sequence belongs to the arsA ATPase family. Homodimer. Component of the Golgi to ER traffic (GET) complex, which is composed of GET1, GET2 and GET3. Within the complex, GET1 and GET2 form a heterotetramer which is stabilized by phosphatidylinositol binding and which binds to the GET3 homodimer. Interacts with the chloride channel protein GEF1.

The protein resides in the cytoplasm. It localises to the endoplasmic reticulum. The protein localises to the golgi apparatus. Its function is as follows. ATPase required for the post-translational delivery of tail-anchored (TA) proteins to the endoplasmic reticulum. Recognizes and selectively binds the transmembrane domain of TA proteins in the cytosol. This complex then targets to the endoplasmic reticulum by membrane-bound receptors GET1 and GET2, where the tail-anchored protein is released for insertion. This process is regulated by ATP binding and hydrolysis. ATP binding drives the homodimer towards the closed dimer state, facilitating recognition of newly synthesized TA membrane proteins. ATP hydrolysis is required for insertion. Subsequently, the homodimer reverts towards the open dimer state, lowering its affinity for the GET1-GET2 receptor, and returning it to the cytosol to initiate a new round of targeting. Cooperates with the HDEL receptor ERD2 to mediate the ATP-dependent retrieval of resident ER proteins that contain a C-terminal H-D-E-L retention signal from the Golgi to the ER. Involved in low-level resistance to the oxyanions arsenite and arsenate, and in heat tolerance. This is ATPase GET3 from Meyerozyma guilliermondii (strain ATCC 6260 / CBS 566 / DSM 6381 / JCM 1539 / NBRC 10279 / NRRL Y-324) (Yeast).